Reading from the N-terminus, the 119-residue chain is MEFGLSWVFLVAILKGVQCEVQLVESGGGLVQPGGSLKLSCAASGFTFSGSAMHWVRQASGKGLEWVGRIRSKANSYATAYAASVKGRFTISRDDSKNTAYLQMNSLKTEDTAVYYCTR.

A signal peptide spans 1–19 (MEFGLSWVFLVAILKGVQC). A framework-1 region spans residues 20-44 (EVQLVESGGGLVQPGGSLKLSCAAS). The region spanning 20-119 (EVQLVESGGG…EDTAVYYCTR (100 aa)) is the Ig-like domain. The cysteines at positions 41 and 117 are disulfide-linked. The tract at residues 45-52 (GFTFSGSA) is complementarity-determining-1. The segment at 53-69 (MHWVRQASGKGLEWVGR) is framework-2. Positions 70 to 79 (IRSKANSYAT) are complementarity-determining-2. The interval 80-117 (AYAASVKGRFTISRDDSKNTAYLQMNSLKTEDTAVYYC) is framework-3. Positions 118-119 (TR) are complementarity-determining-3.

Immunoglobulins are composed of two identical heavy chains and two identical light chains; disulfide-linked.

It is found in the secreted. It localises to the cell membrane. Its function is as follows. V region of the variable domain of immunoglobulin heavy chains that participates in the antigen recognition. Immunoglobulins, also known as antibodies, are membrane-bound or secreted glycoproteins produced by B lymphocytes. In the recognition phase of humoral immunity, the membrane-bound immunoglobulins serve as receptors which, upon binding of a specific antigen, trigger the clonal expansion and differentiation of B lymphocytes into immunoglobulins-secreting plasma cells. Secreted immunoglobulins mediate the effector phase of humoral immunity, which results in the elimination of bound antigens. The antigen binding site is formed by the variable domain of one heavy chain, together with that of its associated light chain. Thus, each immunoglobulin has two antigen binding sites with remarkable affinity for a particular antigen. The variable domains are assembled by a process called V-(D)-J rearrangement and can then be subjected to somatic hypermutations which, after exposure to antigen and selection, allow affinity maturation for a particular antigen. The polypeptide is Immunoglobulin heavy variable 3-73 (Homo sapiens (Human)).